We begin with the raw amino-acid sequence, 633 residues long: Chaperone protein DnaK (633 aa).

Residue Thr-198 is modified to Phosphothreonine; by autocatalysis.

This sequence belongs to the heat shock protein 70 family.

Its function is as follows. Acts as a chaperone. The protein is Chaperone protein DnaK of Rhodopseudomonas palustris (strain HaA2).